The following is a 971-amino-acid chain: Phosphatidylethanolamine N-methyltransferase (971 aa).

Positions 1 to 30 (MDRGLSTSTRIDDEGLRERNVASQSTSTLS) are disordered. Over 1-85 (MDRGLSTSTR…SPSEPKNLSD (85 aa)) the chain is Lumenal. Positions 10–20 (RIDDEGLRERN) are enriched in basic and acidic residues. The span at 21 to 30 (VASQSTSTLS) shows a compositional bias: polar residues. Residues 86-106 (VIVLAILGAHILLLWQLPTGA) form a helical membrane-spanning segment. Topologically, residues 107 to 109 (KVP) are cytoplasmic. Residues 110–130 (VFAIIYLFWRAAYNAGIGWLL) form a helical membrane-spanning segment. At 131-195 (HNQSHHKTLV…EYNTWLVFRR (65 aa)) the chain is on the lumenal side. A helical membrane pass occupies residues 196–216 (LVDLILMCDFVSYCLFAIACS). Residues 217 to 223 (HHPVNES) are Cytoplasmic-facing. The helical transmembrane segment at 224–244 (VLMTVLRWSAGIVLVLFNLWV) threads the bilayer. Residues 245 to 277 (KLDAHRVVKDFAWYWGDFFYLIDQELTFDGVFE) lie on the Lumenal side of the membrane. The helical transmembrane segment at 278–298 (MAPHPMYSVGYAGYYGISLMA) threads the bilayer. Over 299 to 300 (AS) the chain is Cytoplasmic. The chain crosses the membrane as a helical span at residues 301–321 (YKVLFISIIAHAAQFAFLVLV). Residues 322–389 (ENPHIDKTYN…HELLGLHNLD (68 aa)) lie on the Lumenal side of the membrane. The segment at 330 to 359 (YNPPPSRKRSAEQETGSVSSRTADSPIAPT) is disordered. Residues 342-352 (QETGSVSSRTA) show a composition bias toward polar residues. The helical transmembrane segment at 390–411 (LYRITDTSSVLIQFLVFALTVL) threads the bilayer. Residues 412 to 417 (TPSTPW) are Cytoplasmic-facing. The chain crosses the membrane as a helical span at residues 418-441 (YQFLFVANAAVWRLWFSIGVGYML). At 442 to 473 (HRQSNHKAWTRHFVKYGETPQEAWNQWKGTYH) the chain is on the lumenal side. Residues 474–494 (LSMIMCYASFIAAVWKMYNFP) form a helical membrane-spanning segment. The Cytoplasmic portion of the chain corresponds to 495–496 (AD). The helical transmembrane segment at 497 to 517 (WGYGLVLLRHVLGAGLISLQI) threads the bilayer. Residues 518 to 575 (WTSVSIYESLGEFGWFYGDFFFDGSSKLTYNGIYRFLNNPERVLGLAGVWGAVLITSS) lie on the Lumenal side of the membrane. The chain crosses the membrane as a helical span at residues 576–596 (GAITFLALLSHILSLAFIQFI). The Cytoplasmic portion of the chain corresponds to 597–971 (ERPHMQKLYG…GASTPTERKE (375 aa)). Positions 699-723 (VEGTDSSSLAEHDQSTGREGANARM) are disordered.

This sequence belongs to the class VI-like SAM-binding methyltransferase superfamily. CHO2 family.

The protein resides in the endoplasmic reticulum membrane. The catalysed reaction is a 1,2-diacyl-sn-glycero-3-phosphoethanolamine + S-adenosyl-L-methionine = a 1,2-diacyl-sn-glycero-3-phospho-N-methylethanolamine + S-adenosyl-L-homocysteine + H(+). It functions in the pathway phospholipid metabolism; phosphatidylcholine biosynthesis. In terms of biological role, catalyzes the first step of the methylation pathway of phosphatidylcholine biosynthesis, the SAM-dependent methylation of phosphatidylethanolamine (PE) to phosphatidylmonomethylethanolamine (PMME). In Aspergillus flavus (strain ATCC 200026 / FGSC A1120 / IAM 13836 / NRRL 3357 / JCM 12722 / SRRC 167), this protein is Phosphatidylethanolamine N-methyltransferase (cho2).